We begin with the raw amino-acid sequence, 433 residues long: tRNA modification GTPase MnmE (433 aa).

(6S)-5-formyl-5,6,7,8-tetrahydrofolate is bound by residues arginine 24, glutamate 81, and arginine 120. Residues 216–359 (GVEIVVLGAP…LLAALRARVE (144 aa)) enclose the TrmE-type G domain. Asparagine 226 is a K(+) binding site. GTP is bound by residues 226–231 (NAGKST), 245–251 (SDIPGTT), 270–273 (DTAG), and 340–342 (SAR). Mg(2+) is bound at residue serine 230. Residues serine 245, isoleucine 247, and threonine 250 each contribute to the K(+) site. Threonine 251 lines the Mg(2+) pocket. Lysine 433 provides a ligand contact to (6S)-5-formyl-5,6,7,8-tetrahydrofolate.

It belongs to the TRAFAC class TrmE-Era-EngA-EngB-Septin-like GTPase superfamily. TrmE GTPase family. As to quaternary structure, homodimer. Heterotetramer of two MnmE and two MnmG subunits. K(+) serves as cofactor.

It localises to the cytoplasm. Its function is as follows. Exhibits a very high intrinsic GTPase hydrolysis rate. Involved in the addition of a carboxymethylaminomethyl (cmnm) group at the wobble position (U34) of certain tRNAs, forming tRNA-cmnm(5)s(2)U34. This Acidiphilium cryptum (strain JF-5) protein is tRNA modification GTPase MnmE.